Reading from the N-terminus, the 305-residue chain is Glycine--tRNA ligase alpha subunit (305 aa).

The protein belongs to the class-II aminoacyl-tRNA synthetase family. Tetramer of two alpha and two beta subunits.

The protein localises to the cytoplasm. The catalysed reaction is tRNA(Gly) + glycine + ATP = glycyl-tRNA(Gly) + AMP + diphosphate. The sequence is that of Glycine--tRNA ligase alpha subunit from Streptococcus pyogenes serotype M4 (strain MGAS10750).